Here is a 39-residue protein sequence, read N- to C-terminus: Contryphan-Cal1 (39 aa).

Residues 1-20 (MTRTAVLLLTLLFLVAMAAS) form the signal peptide. An intrachain disulfide couples Cys-29 to Cys-35.

In terms of tissue distribution, expressed by the venom duct.

It is found in the secreted. In terms of biological role, probable neurotoxin. This is Contryphan-Cal1 from Californiconus californicus (California cone).